The following is a 280-amino-acid chain: Ribosomal RNA small subunit methyltransferase A (280 aa).

The S-adenosyl-L-methionine site is built by Asn28, Leu30, Gly55, Glu77, Asp103, and Asn122.

This sequence belongs to the class I-like SAM-binding methyltransferase superfamily. rRNA adenine N(6)-methyltransferase family. RsmA subfamily.

It localises to the cytoplasm. The catalysed reaction is adenosine(1518)/adenosine(1519) in 16S rRNA + 4 S-adenosyl-L-methionine = N(6)-dimethyladenosine(1518)/N(6)-dimethyladenosine(1519) in 16S rRNA + 4 S-adenosyl-L-homocysteine + 4 H(+). Specifically dimethylates two adjacent adenosines (A1518 and A1519) in the loop of a conserved hairpin near the 3'-end of 16S rRNA in the 30S particle. May play a critical role in biogenesis of 30S subunits. In Roseobacter denitrificans (strain ATCC 33942 / OCh 114) (Erythrobacter sp. (strain OCh 114)), this protein is Ribosomal RNA small subunit methyltransferase A.